The following is a 378-amino-acid chain: Protein RecA (378 aa).

Residues 1-20 are disordered; it reads MAAKKDKSVPDSKITDKEGK. Position 80–87 (80–87) interacts with ATP; the sequence is GAESSGKT. The interval 344-378 is disordered; it reads GPVDKKKKKSKKEASSDDTDDENLEIDDAIDENND. The span at 359 to 378 shows a compositional bias: acidic residues; sequence SDDTDDENLEIDDAIDENND.

This sequence belongs to the RecA family.

The protein resides in the cytoplasm. Its function is as follows. Can catalyze the hydrolysis of ATP in the presence of single-stranded DNA, the ATP-dependent uptake of single-stranded DNA by duplex DNA, and the ATP-dependent hybridization of homologous single-stranded DNAs. It interacts with LexA causing its activation and leading to its autocatalytic cleavage. In Fusobacterium nucleatum subsp. nucleatum (strain ATCC 25586 / DSM 15643 / BCRC 10681 / CIP 101130 / JCM 8532 / KCTC 2640 / LMG 13131 / VPI 4355), this protein is Protein RecA.